The chain runs to 332 residues: Glycerol-3-phosphate dehydrogenase [NAD(P)+] (332 aa).

NADPH is bound by residues W13, K34, and K108. K108, G136, and S138 together coordinate sn-glycerol 3-phosphate. A140 lines the NADPH pocket. The sn-glycerol 3-phosphate site is built by K191, D244, S254, R255, and N256. K191 serves as the catalytic Proton acceptor. R255 contributes to the NADPH binding site. V279 and E281 together coordinate NADPH.

It belongs to the NAD-dependent glycerol-3-phosphate dehydrogenase family.

It localises to the cytoplasm. The catalysed reaction is sn-glycerol 3-phosphate + NAD(+) = dihydroxyacetone phosphate + NADH + H(+). It carries out the reaction sn-glycerol 3-phosphate + NADP(+) = dihydroxyacetone phosphate + NADPH + H(+). Its pathway is membrane lipid metabolism; glycerophospholipid metabolism. In terms of biological role, catalyzes the reduction of the glycolytic intermediate dihydroxyacetone phosphate (DHAP) to sn-glycerol 3-phosphate (G3P), the key precursor for phospholipid synthesis. The protein is Glycerol-3-phosphate dehydrogenase [NAD(P)+] of Francisella tularensis subsp. holarctica (strain FTNF002-00 / FTA).